We begin with the raw amino-acid sequence, 389 residues long: MNLHEYQAKQLFEHYGLPVKNGAVCQSVDEVDLVLAQLSGDKWAAKCQVHAGGRGKAGGVKLVQDVEEARSFAEKWLGQRLVTFQTDKLGQPVNQIYFEETCDIDKEFYLSAVVDRASQKVVFIASPAGGMDIEEVAQNTPHLLHKVEIDPLFGGLPYQGRELAFKLGLSGTQNKQFTDIFMGLSRLFLEKDLSLLEVNPLVLTQQGNLVCLDAKIAVDDNALFRHKDLSALQDLTQNDAREAEAEKFQLNYVALEGDIGCMVNGAGLAMGTMDIVKLYGGKPANFLDVGGGATKERVAEAFKIILTDPSVKVILVNIFGGIVRCDLIAEGVIAAVNEVGVRVPVVVRLEGTNAEIGRQILAESDVNILTAHSLQQAAELAVNAAKGEH.

ATP contacts are provided by residues K46, G53 to G55, E99, C102, and E107. Mg(2+) contacts are provided by N199 and D213. Substrate contacts are provided by residues N264 and G321–V323.

It belongs to the succinate/malate CoA ligase beta subunit family. In terms of assembly, heterotetramer of two alpha and two beta subunits. The cofactor is Mg(2+).

It carries out the reaction succinate + ATP + CoA = succinyl-CoA + ADP + phosphate. It catalyses the reaction GTP + succinate + CoA = succinyl-CoA + GDP + phosphate. It functions in the pathway carbohydrate metabolism; tricarboxylic acid cycle; succinate from succinyl-CoA (ligase route): step 1/1. Its function is as follows. Succinyl-CoA synthetase functions in the citric acid cycle (TCA), coupling the hydrolysis of succinyl-CoA to the synthesis of either ATP or GTP and thus represents the only step of substrate-level phosphorylation in the TCA. The beta subunit provides nucleotide specificity of the enzyme and binds the substrate succinate, while the binding sites for coenzyme A and phosphate are found in the alpha subunit. In Haemophilus influenzae (strain PittEE), this protein is Succinate--CoA ligase [ADP-forming] subunit beta.